The primary structure comprises 554 residues: Muellerian-inhibiting factor (554 aa).

The N-terminal stretch at 1 to 24 (MQGPHLSPLVLLLATMGAVLQPEA) is a signal peptide. Positions 25–446 (VENLATNTRG…GREGRGRTGR (422 aa)) are excised as a propeptide. Residues asparagine 62, asparagine 326, and asparagine 410 are each glycosylated (N-linked (GlcNAc...) asparagine). 3 disulfides stabilise this stretch: cysteine 456-cysteine 520, cysteine 482-cysteine 551, and cysteine 486-cysteine 553.

This sequence belongs to the TGF-beta family. In terms of assembly, homodimer; disulfide-linked. Post-translationally, preproprotein is proteolytically processed to generate N- and C-terminal cleavage products that homodimerize and associate to form a biologically active non-covalent complex. Binding of the non-covalent complex to AMHRII induces dissociation of the pro-region from the mature C-terminal dimer. The N-terminal portion of the protein, despite having no intrinsic activity, has the role of amplifying the activity of the C-terminus. Expressed in Sertoli cells of fetal testes, and in testes just after birth, but absent in adult testes. In female, AMH is expressed after birth in the granulosa cells of the follicle.

It is found in the secreted. Functionally, plays an important role in several reproductive functions, including Muellerian duct regression during male fetal sexua,l differentiation and in the adult plays a role in Leydig cell differentiation and function. In female acts as a negative regulator of the primordial to primary follicle transition and decreases FSH sensitivity of growing follicles. Binds to its sole type II receptor, AMHR2 that recruits type I receptors ACVR1 and BMPR1A which subsequently activates the Smad pathway. The chain is Muellerian-inhibiting factor (Amh) from Mus musculus (Mouse).